The primary structure comprises 320 residues: D-alanine--D-alanine ligase (320 aa).

Residues 101–317 (KMIFQGAGLP…FSELVCKILS (217 aa)) form the ATP-grasp domain. ATP is bound at residue 148–203 (INQLGLPLIVKPSREGSSFGMTKVEHLDQLDDALKKAWHYDEEILVEKWHFGTELT). Mg(2+)-binding residues include D271, E284, and N286.

Belongs to the D-alanine--D-alanine ligase family. The cofactor is Mg(2+). Mn(2+) is required as a cofactor.

The protein localises to the cytoplasm. The catalysed reaction is 2 D-alanine + ATP = D-alanyl-D-alanine + ADP + phosphate + H(+). It participates in cell wall biogenesis; peptidoglycan biosynthesis. Its function is as follows. Cell wall formation. This chain is D-alanine--D-alanine ligase, found in Hamiltonella defensa subsp. Acyrthosiphon pisum (strain 5AT).